A 664-amino-acid polypeptide reads, in one-letter code: UvrABC system protein B (664 aa).

One can recognise a Helicase ATP-binding domain in the interval 25–182 (KSFGEGKNKI…RKFLHIQYAR (158 aa)). Position 38–45 (38–45 (GVTGSGKT)) interacts with ATP. The Beta-hairpin motif lies at 91–114 (YYDYYQPEAYVPSSDTFIEKDMSM). The Helicase C-terminal domain maps to 429–595 (QIEDLLNEIR…TIQKEIHDIL (167 aa)). A UVR domain is found at 625–660 (DKLREALKREMLRYANDMDFEKAAMFRDKMLALGPD).

It belongs to the UvrB family. Forms a heterotetramer with UvrA during the search for lesions. Interacts with UvrC in an incision complex.

The protein localises to the cytoplasm. In terms of biological role, the UvrABC repair system catalyzes the recognition and processing of DNA lesions. A damage recognition complex composed of 2 UvrA and 2 UvrB subunits scans DNA for abnormalities. Upon binding of the UvrA(2)B(2) complex to a putative damaged site, the DNA wraps around one UvrB monomer. DNA wrap is dependent on ATP binding by UvrB and probably causes local melting of the DNA helix, facilitating insertion of UvrB beta-hairpin between the DNA strands. Then UvrB probes one DNA strand for the presence of a lesion. If a lesion is found the UvrA subunits dissociate and the UvrB-DNA preincision complex is formed. This complex is subsequently bound by UvrC and the second UvrB is released. If no lesion is found, the DNA wraps around the other UvrB subunit that will check the other stand for damage. This is UvrABC system protein B from Leptospira biflexa serovar Patoc (strain Patoc 1 / Ames).